The sequence spans 490 residues: Probable glycine dehydrogenase (decarboxylating) subunit 2 (490 aa).

N6-(pyridoxal phosphate)lysine is present on K273.

This sequence belongs to the GcvP family. C-terminal subunit subfamily. In terms of assembly, the glycine cleavage system is composed of four proteins: P, T, L and H. In this organism, the P 'protein' is a heterodimer of two subunits. Requires pyridoxal 5'-phosphate as cofactor.

The catalysed reaction is N(6)-[(R)-lipoyl]-L-lysyl-[glycine-cleavage complex H protein] + glycine + H(+) = N(6)-[(R)-S(8)-aminomethyldihydrolipoyl]-L-lysyl-[glycine-cleavage complex H protein] + CO2. Functionally, the glycine cleavage system catalyzes the degradation of glycine. The P protein binds the alpha-amino group of glycine through its pyridoxal phosphate cofactor; CO(2) is released and the remaining methylamine moiety is then transferred to the lipoamide cofactor of the H protein. In Staphylococcus aureus (strain bovine RF122 / ET3-1), this protein is Probable glycine dehydrogenase (decarboxylating) subunit 2.